The sequence spans 332 residues: Trace amine-associated receptor 1 (332 aa).

Residues 1-23 are Extracellular-facing; that stretch reads MHLCHAITNISHRNSDWSREVQA. Asn-9 is a glycosylation site (N-linked (GlcNAc...) asparagine). A helical transmembrane segment spans residues 24–48; it reads SLYSLMSLIILATLVGNLIVIISIS. At 49–58 the chain is on the cytoplasmic side; sequence HFKQLHTPTN. A helical transmembrane segment spans residues 59 to 80; the sequence is WLLHSMAIVDFLLGCLIMPCSM. The Extracellular segment spans residues 81-95; that stretch reads VRTVERCWYFGEILC. Cys-95 and Cys-181 are joined by a disulfide. A helical membrane pass occupies residues 96–118; the sequence is KVHTSTDIMLSSASIFHLAFISI. Residue Asp-102 coordinates 2-phenylethylamine. The Cytoplasmic segment spans residues 119 to 138; it reads DRYCAVCDPLRYKAKINIST. The chain crosses the membrane as a helical span at residues 139 to 160; it reads ILVMILVSWSLPAVYAFGMIFL. Over 161–187 the chain is Extracellular; sequence ELNLKGVEELYRSQVSDLGGCSPFFSK. An extracellular Loop 2 (ECL2) region spans residues 174–185; sequence QVSDLGGCSPFF. Residues 188–210 form a helical membrane-spanning segment; that stretch reads VSGVLAFMTSFYIPGSVMLFVYY. The Cytoplasmic portion of the chain corresponds to 211–246; that stretch reads RIYFIAKGQARSINRTNVQVGLEGKSQAPQSKETKA. The helical transmembrane segment at 247–270 threads the bilayer; the sequence is AKTLGIMVGVFLVCWCPFFLCTVL. Over 271-283 the chain is Extracellular; it reads DPFLGYVIPPSLN. The chain crosses the membrane as a helical span at residues 284–304; it reads DALYWFGYLNSALNPMVYAFF. Topologically, residues 305–332 are cytoplasmic; it reads YPWFRRALKMVLLGKIFQKDSSRSKLFL.

It belongs to the G-protein coupled receptor 1 family. As to expression, widely distributed throughout the brain. Strongly expressed in the mitral cell layer of the olfactory bulb, piriform cortex, the arcuate, motor, and mesencephalic trigeminal nuclei, lateral reticular and hypoglossal nuclei, cerebellar Purkinje cells, and ventral horn of the spinal cord. Moderately expressed in the frontal, entorhinal, and agranular cortices, the ventral pallidum, thalamus, hippocampus, several hypothalamic nuclei, ambiguus, dorsal raphe, and gigantocellular reticular nuclei. Weakly expressed in the septum, basal ganglia, amygdala, myelencephalon, and spinal cord dorsal horn. Particularly interesting is the moderate expression in several monoaminergic cell groups, namely the dorsal raphe, the locus coeruleus, and the ventral tegmental area.

The protein localises to the endomembrane system. The protein resides in the endoplasmic reticulum membrane. Its subcellular location is the cell membrane. Activated by SEP-363856 small molecule: IHCH-7179 acts both as an agonist activator for HTR1A and TAAR1. In terms of biological role, intracellular G-protein coupled receptor for trace amines, which recognizes endogenous amine-containing metabolites such as beta-phenylethylamine (beta-PEA), 3-iodothyronamine (T1AM), isoamylamine (IAA), cadaverine (CAD), cyclohexylamine (CHA), p-tyramine (p-TYR), trimethylamine (TMA), octopamine and tryptamine. Also functions as a receptor for various drugs and psychoactive substances, such as amphetamine and methamphetamine. Unresponsive to classical biogenic amines, such as epinephrine and histamine and only partially activated by dopamine and serotonin. Expressed in both the central and peripheral nervous system: TAAR1 activation regulates the activity of several neurotransmitter signaling pathways by (1) decreasing the basal firing rates of the neurons involved and by (2) lowering the sensitivity of receptors to neurotransmitters. Ligand binding causes a conformation change that triggers signaling via guanine nucleotide-binding proteins (G proteins) and modulates the activity of downstream effectors. TAAR1 is coupled with different G(i)/G(o)-, G(s)- or G(q)/G(11) classes of G alpha proteins depending on the ligand. CAD-binding is coupled to G(i)/G(o) G alpha proteins and mediates inhibition of adenylate cyclase activity. T1AM- or beta-PEA-binding is coupled to G(s) G alpha proteins and mediates activation of adenylate cyclase activity. CHA- or IAA-binding is coupled to G(q)/G(11) G alpha proteins and activates phospholipase C-beta, releasing diacylglycerol (DAG) and inositol 1,4,5-trisphosphate (IP3) second messengers. TMA-binding is coupled with all three G(i)/G(o)-, G(s)- or G(q)/G(11) G alpha protein subtypes. This is Trace amine-associated receptor 1 from Mus musculus (Mouse).